Here is a 143-residue protein sequence, read N- to C-terminus: Small ribosomal subunit protein uS12 (143 aa).

Residues Met1–Ala19 are compositionally biased toward basic residues. A disordered region spans residues Met1 to Arg21. Pro62 carries the post-translational modification Hydroxyproline.

This sequence belongs to the universal ribosomal protein uS12 family. Component of the 40S small ribosomal subunit.

It is found in the cytoplasm. It localises to the cytosol. The protein resides in the rough endoplasmic reticulum. This Brugia malayi (Filarial nematode worm) protein is Small ribosomal subunit protein uS12 (rps-23).